We begin with the raw amino-acid sequence, 151 residues long: Aspartate carbamoyltransferase regulatory chain (151 aa).

Residues Cys-107, Cys-112, Cys-135, and Cys-138 each coordinate Zn(2+).

The protein belongs to the PyrI family. In terms of assembly, contains catalytic and regulatory chains. The cofactor is Zn(2+).

Involved in allosteric regulation of aspartate carbamoyltransferase. The sequence is that of Aspartate carbamoyltransferase regulatory chain from Thermococcus gammatolerans (strain DSM 15229 / JCM 11827 / EJ3).